The chain runs to 293 residues: Glycine--tRNA ligase alpha subunit (293 aa).

It belongs to the class-II aminoacyl-tRNA synthetase family. Tetramer of two alpha and two beta subunits.

Its subcellular location is the cytoplasm. It carries out the reaction tRNA(Gly) + glycine + ATP = glycyl-tRNA(Gly) + AMP + diphosphate. The sequence is that of Glycine--tRNA ligase alpha subunit from Oceanobacillus iheyensis (strain DSM 14371 / CIP 107618 / JCM 11309 / KCTC 3954 / HTE831).